Consider the following 147-residue polypeptide: Large ribosomal subunit protein uL13 (147 aa).

Belongs to the universal ribosomal protein uL13 family. As to quaternary structure, part of the 50S ribosomal subunit.

This protein is one of the early assembly proteins of the 50S ribosomal subunit, although it is not seen to bind rRNA by itself. It is important during the early stages of 50S assembly. The protein is Large ribosomal subunit protein uL13 of Latilactobacillus sakei subsp. sakei (strain 23K) (Lactobacillus sakei subsp. sakei).